The sequence spans 228 residues: Ribose-5-phosphate isomerase A (228 aa).

Substrate contacts are provided by residues Thr32 to Thr35, Asp85 to Asp88, and Lys98 to Gly101. Residue Glu107 is the Proton acceptor of the active site. Position 125 (Lys125) interacts with substrate.

This sequence belongs to the ribose 5-phosphate isomerase family. As to quaternary structure, homodimer.

The catalysed reaction is aldehydo-D-ribose 5-phosphate = D-ribulose 5-phosphate. Its pathway is carbohydrate degradation; pentose phosphate pathway; D-ribose 5-phosphate from D-ribulose 5-phosphate (non-oxidative stage): step 1/1. In terms of biological role, catalyzes the reversible conversion of ribose-5-phosphate to ribulose 5-phosphate. This chain is Ribose-5-phosphate isomerase A, found in Cupriavidus taiwanensis (strain DSM 17343 / BCRC 17206 / CCUG 44338 / CIP 107171 / LMG 19424 / R1) (Ralstonia taiwanensis (strain LMG 19424)).